The chain runs to 172 residues: uncharacterized protein (172 aa).

This is an uncharacterized protein from Rattus norvegicus (Rat).